Reading from the N-terminus, the 311-residue chain is Catechol 1,2-dioxygenase 1 (311 aa).

Tyr164, Tyr200, His224, and His226 together coordinate Fe cation.

This sequence belongs to the intradiol ring-cleavage dioxygenase family. As to quaternary structure, homodimer. It depends on Fe(3+) as a cofactor.

The enzyme catalyses catechol + O2 = cis,cis-muconate + 2 H(+). Its pathway is aromatic compound metabolism; beta-ketoadipate pathway; 5-oxo-4,5-dihydro-2-furylacetate from catechol: step 1/3. In terms of biological role, can cleave 4-methyl-, 4-chloro-, and 3-methoxycatechol at lower rates than catechol, but has no activity with 4-nitrocatechol or protocatechuic acid. This Acinetobacter lwoffii protein is Catechol 1,2-dioxygenase 1 (catA1).